The sequence spans 219 residues: Clathrin light chain (219 aa).

Residues Ala-32–Lys-136 are disordered. The segment at Pro-96–Arg-158 is involved in binding clathrin heavy chain. Residues Ser-99–Lys-136 show a composition bias toward basic and acidic residues.

This sequence belongs to the clathrin light chain family. As to quaternary structure, clathrin coats are formed from molecules containing 3 heavy chains and 3 light chains.

It is found in the cytoplasmic vesicle membrane. The protein localises to the membrane. Its subcellular location is the coated pit. Its function is as follows. Clathrin is the major protein of the polyhedral coat of coated pits and vesicles. This chain is Clathrin light chain (Clc), found in Drosophila melanogaster (Fruit fly).